We begin with the raw amino-acid sequence, 159 residues long: NADH dehydrogenase [ubiquinone] 1 beta subcomplex subunit 10 (159 aa).

Belongs to the complex I NDUFB10 subunit family. In terms of assembly, complex I is composed of 45 different subunits.

The protein localises to the mitochondrion inner membrane. Accessory subunit of the mitochondrial membrane respiratory chain NADH dehydrogenase (Complex I), that is believed not to be involved in catalysis. Complex I functions in the transfer of electrons from NADH to the respiratory chain. The immediate electron acceptor for the enzyme is believed to be ubiquinone. The polypeptide is NADH dehydrogenase [ubiquinone] 1 beta subcomplex subunit 10 (Bombyx mori (Silk moth)).